The primary structure comprises 302 residues: tRNA pseudouridine synthase B (302 aa).

D48 acts as the Nucleophile in catalysis.

The protein belongs to the pseudouridine synthase TruB family. Type 1 subfamily.

The catalysed reaction is uridine(55) in tRNA = pseudouridine(55) in tRNA. Responsible for synthesis of pseudouridine from uracil-55 in the psi GC loop of transfer RNAs. This is tRNA pseudouridine synthase B from Xylella fastidiosa (strain Temecula1 / ATCC 700964).